The following is a 956-amino-acid chain: Calsyntenin-3 (956 aa).

Positions 1 to 19 (MTLLLLPLLLASLLASCSC) are cleaved as a signal peptide. Residues 1-30 (MTLLLLPLLLASLLASCSCNKANKHKPWIE) are Cytoplasmic-facing. Topologically, residues 20-847 (NKANKHKPWI…SHRNSMIPSA (828 aa)) are extracellular. 2 consecutive Cadherin domains span residues 29-145 (IEAE…APVF) and 146-246 (VERL…KPSW). An intramembrane region (helical) is located at residues 31-51 (AEYQGIVMENDNTVLLNPPLF). Residues 52-71 (ALDKDAPLRYAGEICGFRLH) lie on the Cytoplasmic side of the membrane. Residues 72–94 (GSGVPFEAVILDKATGEGLIRAK) constitute an intramembrane region (helical). Residues 95–151 (EPVDCEAQKEHTFTIQAYDCGEGPDGANTKKSHKATVHVRVNDVNEFAPVFVERLYR) are Cytoplasmic-facing. Positions 152-172 (AAVTEGKLYDRILRVEAIDGD) form an intramembrane region, helical. At 173 to 255 (CSPQYSQICY…WQGWNKRIEY (83 aa)) the chain is on the cytoplasmic side. Residues 256 to 276 (APGAGSLALFPGIRLETCDEP) traverse the membrane as a helical segment. At 277–364 (LWNIQATIEL…PLGGPSGLGS (88 aa)) the chain is on the lumenal side. N-linked (GlcNAc...) asparagine glycans are attached at residues asparagine 299, asparagine 327, asparagine 347, asparagine 507, and asparagine 740. A helical membrane pass occupies residues 848 to 868 (ATLIIVVCVGFLVLMVVLGLV). The Cytoplasmic portion of the chain corresponds to 869 to 956 (RIHSLHRRVS…RIIETPPHRY (88 aa)). Positions 916-956 (QSCVTGAVGGQQEDEDSSDSEVADSPSSDERRIIETPPHRY) are disordered. The span at 927-937 (QEDEDSSDSEV) shows a compositional bias: acidic residues. Positions 943–956 (SDERRIIETPPHRY) are enriched in basic and acidic residues.

Belongs to the calsyntenin family. In terms of assembly, interacts (via cadherin domains) with both alpha and beta isoforms of neurexins (NRXN1, NRXN2 and NRXN3). Directly interacts with APBA2. Forms a tripartite complex with APBA2 and APP. Interacts with low affinity with KLC1. Interacts with SLC23A2/SVCT2. As to quaternary structure, interacts with CIDEA; inhibiting the lipid transferase activity of CIDEA. Interacts with CIDEC; inhibiting the lipid transferase activity of CIDEC. In terms of processing, proteolytically processed under normal cellular conditions. A primary zeta-cleavage generates a large extracellular (soluble) N-terminal domain (sAlc) and a short C-terminal transmembrane fragment (CTF1). A secondary cleavage catalyzed by gamma-secretase within the transmembrane domain releases the beta-Alc-beta chain in the extracellular milieu and produces an intracellular fragment (AlcICD). This processing is strongly suppressed in the tripartite complex formed with APBA2 and APP, which seems to prevent the association with gamma-secretase. Post-translationally, ubiquitinated: endoplasmic reticulum-localized protein is ubiquitinated and degraded by the endoplasmic reticulum-associated degradation (ERAD) pathway. In terms of tissue distribution, according to PubMed:12498782, expressed predominantly in the brain and in kidney. Low levels in heart, skeletal muscle, liver, placenta, pancreas and lung. According to PubMed:12972431, predominant expression in brain, and only marginal in kidney. In brain, present throughout all cortical layers, highest levels in GABAergic neurons (based on morphology and distribution pattern). Expression is restricted to adipose tissue, with high expression in multilocular thermogenic adipocytes (brown adipose tissue).

Its subcellular location is the postsynaptic cell membrane. It localises to the endoplasmic reticulum membrane. It is found in the golgi apparatus membrane. The protein resides in the cell projection. The protein localises to the dendrite. Its subcellular location is the lipid droplet. Postsynaptic adhesion molecule that binds to presynaptic neurexins to mediate both excitatory and inhibitory synapse formation. Promotes synapse development by acting as a cell adhesion molecule at the postsynaptic membrane, which associates with both neurexin-alpha and neurexin-beta proteins at the presynaptic membrane. Regulates the balance between excitatory and inhibitory synapses by inhibiting formation of excitatory parallel-fiber synapses and promoting formation of inhibitory synapses in the same neuron. May also be involved in ascorbate (vitamin C) uptake via its interaction with SLC23A2/SVCT2. Complex formation with APBA2 and APP, stabilizes APP metabolism and enhances APBA2-mediated suppression of beta-APP40 secretion, due to the retardation of intracellular APP maturation. In terms of biological role, adipose-specific isoform that plays a key role in adaptive thermogenesis. Facilitates the efficient use of stored triglyceride by promoting multilocular morphology of thermogenic adipocytes: acts by inhibiting the activity of CIDEA and CIDEC on lipid droplets, thereby preventing lipid droplet fusion and facilitating lipid utilization. May also participate in adaptive thermogenesis by promoting sympathetic innervation of thermogenic adipose tissue: acts by driving secretion of neurotrophic factor S100B from brown adipocytes, stimulating neurite outgrowth from sympathetic neurons. The chain is Calsyntenin-3 from Homo sapiens (Human).